Here is a 955-residue protein sequence, read N- to C-terminus: E3 ubiquitin-protein ligase MIB2 (955 aa).

N-acetylmethionine is present on Met-1. The MIB/HERC2 1 domain occupies 1–80 (MDPDPQAGVQ…AHDLLLYDNA (80 aa)). The segment at 86-138 (HPNIICDCCKKHGLRGMRWKCRVCLDYDLCTQCYMHNKHELAHAFDRYETAHS) adopts a ZZ-type zinc-finger fold. Residues Cys-91, Cys-94, Cys-106, Cys-109, Cys-115, Cys-118, His-124, and His-128 each contribute to the Zn(2+) site. Positions 149–227 (LPRIPLRGIF…KVDLKCVGEA (79 aa)) constitute an MIB/HERC2 2 domain. At Ser-251 the chain carries Phosphoserine. ANK repeat units lie at residues 464–493 (QGRT…GVDL), 497–526 (EGNT…RADA), 530–559 (TQST…DVNL), 563–595 (HSDT…DVTA), 599–628 (QGFT…QLVD), 633–663 (DGFT…DVNV), 667–696 (KLQS…SVNA), 700–728 (EGDT…DPGP), and 769–798 (RGRS…ERQA). 2 consecutive RING-type zinc fingers follow at residues 832-867 (CLVC…IRCQ) and 911-944 (CPIC…PICR).

Interacts with actin monomer. Post-translationally, ubiquitinated. Possibly via autoubiquitination. Expressed in skeletal muscle, and to a lesser extent in heart, brain and kidney.

The protein localises to the cytoplasm. Its subcellular location is the endosome. The enzyme catalyses S-ubiquitinyl-[E2 ubiquitin-conjugating enzyme]-L-cysteine + [acceptor protein]-L-lysine = [E2 ubiquitin-conjugating enzyme]-L-cysteine + N(6)-ubiquitinyl-[acceptor protein]-L-lysine.. Its pathway is protein modification; protein ubiquitination. Functionally, E3 ubiquitin-protein ligase that mediates ubiquitination of Delta receptors, which act as ligands of Notch proteins. Positively regulates the Delta-mediated Notch signaling by ubiquitinating the intracellular domain of Delta, leading to endocytosis of Delta receptors. This is E3 ubiquitin-protein ligase MIB2 from Homo sapiens (Human).